A 344-amino-acid chain; its full sequence is Autoinducer 2 import system permease protein LsrC (344 aa).

The next 9 helical transmembrane spans lie at 13–33, 38–58, 69–89, 90–110, 114–134, 155–175, 212–232, 251–271, and 283–303; these read FFAIVALFVVLVALNPAYFIL, MIFASSQILCLLALGATLVML, TVGLCAIAVGVALNYGYGLAT, AIAFALAIGALAGAFNGLLVV, IPAIVATLGTLGLYRGVMLLW, FIGVSPLGWLVLALLLAGGWL, LNGMLAACAGIVFAAQIGFVP, GISLLGGTGTLLGAFLGAFFL, and LPAWWNDFIAGLVLLGVLVLD. Residues 323-344 form a disordered region; that stretch reads QPGNKGSKQVARFPERKSKEVA. A compositionally biased stretch (basic and acidic residues) spans 335 to 344; that stretch reads FPERKSKEVA.

Belongs to the binding-protein-dependent transport system permease family. AraH/RbsC subfamily. In terms of assembly, the complex is composed of two ATP-binding proteins (LsrA), two transmembrane proteins (LsrC and LsrD) and a solute-binding protein (LsrB).

Its subcellular location is the cell inner membrane. In terms of biological role, part of the ABC transporter complex LsrABCD involved in autoinducer 2 (AI-2) import. Probably responsible for the translocation of the substrate across the membrane. The chain is Autoinducer 2 import system permease protein LsrC (lsrC) from Klebsiella pneumoniae subsp. pneumoniae (strain ATCC 700721 / MGH 78578).